The chain runs to 190 residues: dITP/XTP pyrophosphatase (190 aa).

10 to 15 (TTNKHK) provides a ligand contact to substrate. Mg(2+) contacts are provided by Glu39 and Asp68. Asp68 (proton acceptor) is an active-site residue. Substrate-binding positions include Ala69, 143–146 (FGYD), Lys166, and 171–172 (HR).

It belongs to the HAM1 NTPase family. In terms of assembly, homodimer. Requires Mg(2+) as cofactor.

The enzyme catalyses XTP + H2O = XMP + diphosphate + H(+). It carries out the reaction dITP + H2O = dIMP + diphosphate + H(+). It catalyses the reaction ITP + H2O = IMP + diphosphate + H(+). In terms of biological role, pyrophosphatase that catalyzes the hydrolysis of nucleoside triphosphates to their monophosphate derivatives, with a high preference for the non-canonical purine nucleotides XTP (xanthosine triphosphate), dITP (deoxyinosine triphosphate) and ITP. Seems to function as a house-cleaning enzyme that removes non-canonical purine nucleotides from the nucleotide pool, thus preventing their incorporation into DNA/RNA and avoiding chromosomal lesions. This chain is dITP/XTP pyrophosphatase, found in Hyperthermus butylicus (strain DSM 5456 / JCM 9403 / PLM1-5).